We begin with the raw amino-acid sequence, 398 residues long: MPVPASWPHLPSPFLLMTLLLGRLTGVAGEDELQVIQPEKSVSVAAGESATLRCAMTSLIPVGPIMWFRGAGAGRELIYNQKEGHFPRVTTVSELTKRNNLDFSISISNITPADAGTYYCVKFRKGSPDDVEFKSGAGTELSVRAKPSAPVVSGPAVRATPEHTVSFTCESHGFSPRDITLKWFKNGNELSDFQTNVDPAGDSVSYSIHSTARVVLTRGDVHSQVICEIAHITLQGDPLRGTANLSEAIRVPPTLEVTQQPMRAENQANVTCQVSNFYPRGLQLTWLENGNVSRTETASTLIENKDGTYNWMSWLLVNTCAHRDDVVLTCQVEHDGQQAVSKSYALEISAHQKEHGSDITHEAALAPTAPLLVALLLGPKLLLVVGVSAIYICWKQKA.

Residues 1-29 (MPVPASWPHLPSPFLLMTLLLGRLTGVAG) form the signal peptide. Residues 30-136 (EDELQVIQPE…SPDDVEFKSG (107 aa)) enclose the Ig-like V-type domain. Residues 30–371 (EDELQVIQPE…EAALAPTAPL (342 aa)) lie on the Extracellular side of the membrane. Intrachain disulfides connect cysteine 54/cysteine 120 and cysteine 169/cysteine 227. Ig-like C1-type domains follow at residues 147 to 246 (PSAP…ANLS) and 253 to 347 (PTLE…YALE). Residues asparagine 244, asparagine 269, and asparagine 291 are each glycosylated (N-linked (GlcNAc...) asparagine). A helical membrane pass occupies residues 372 to 392 (LVALLLGPKLLLVVGVSAIYI). Topologically, residues 393–398 (CWKQKA) are cytoplasmic.

In terms of assembly, homodimer; disulfide-linked. Interacts with TYROBP. This interaction results in the recruitment of SYK. In terms of processing, N-glycosylated. In terms of tissue distribution, detected in monocytes and dendritic cells.

Its subcellular location is the cell membrane. Functionally, immunoglobulin-like cell surface receptor involved in the negative regulation of receptor tyrosine kinase-coupled signaling processes. Also participates in the recruitment of tyrosine kinase SYK. Triggers activation of myeloid cells when associated with TYROBP. This is Signal-regulatory protein beta-1 (SIRPB1) from Homo sapiens (Human).